The primary structure comprises 302 residues: Nodulation protein D 3 (302 aa).

An HTH lysR-type domain is found at 6–63 (LDLNLLVALDALMIERNLTAAARSINLSQPAMSAAVRRLRSYFRDELFTMRGREFVPT). The H-T-H motif DNA-binding region spans 23 to 42 (LTAAARSINLSQPAMSAAVR).

This sequence belongs to the LysR transcriptional regulatory family.

NodD regulates the expression of the nodABCFE genes which encode other nodulation proteins. NodD is also a negative regulator of its own expression. Binds flavonoids as inducers. The polypeptide is Nodulation protein D 3 (nodD3) (Rhizobium leguminosarum bv. phaseoli).